Here is a 588-residue protein sequence, read N- to C-terminus: Dual specificity tyrosine-phosphorylation-regulated kinase 3 (588 aa).

The tract at residues 1–188 (MGGTARGPGR…HGVIGGPNNG (188 aa)) is disordered. Residues 97-134 (SNTIQSDGISDSEKCSPTVSQGKSSDCLNTVKSNSSSK) are compositionally biased toward polar residues. The region spanning 209 to 522 (YEVLKIIGKG…PAQALRHPWI (314 aa)) is the Protein kinase domain. Residues 215–223 (IGKGSFGQV), K238, and 288–291 (FELL) contribute to the ATP site. Catalysis depends on D335, which acts as the Proton acceptor. S350 is modified (phosphoserine). Y369 is modified (phosphotyrosine). The Nuclear localization signal signature appears at 468–481 (RSRRGKKRGPPGSK).

It belongs to the protein kinase superfamily. CMGC Ser/Thr protein kinase family. MNB/DYRK subfamily. As to quaternary structure, interacts with SIRT1. Mg(2+) serves as cofactor. Ubiquitinated at anaphase by the anaphase-promoting complex (APC/C), leading to its degradation by the proteasome. In terms of processing, protein kinase activity is activated following autophosphorylation at Tyr-369. Autophosphorylation at Ser-350 stabilizes the protein and enhances the protein kinase activity. As to expression, isoform 1: Highly expressed in testis and in hematopoietic tissue such as fetal liver, and bone marrow. Isoform 1: Predominant form in fetal liver and bone marrow. Isoform 1: Present at low levels in heart, pancreas, lymph node and thymus. Isoform 2: Highly expressed in testis and in hematopoietic tissue such as fetal liver, and bone marrow. Isoform 2: Predominant form in testis. Isoform 2: Present at low levels in heart, pancreas, lymph node and thymus.

Its subcellular location is the nucleus. The protein localises to the cytoplasm. It is found in the nucleus speckle. The protein resides in the cytoplasmic granule. It localises to the cytoskeleton. Its subcellular location is the microtubule organizing center. The protein localises to the centrosome. It carries out the reaction L-seryl-[protein] + ATP = O-phospho-L-seryl-[protein] + ADP + H(+). It catalyses the reaction L-threonyl-[protein] + ATP = O-phospho-L-threonyl-[protein] + ADP + H(+). The enzyme catalyses L-tyrosyl-[protein] + ATP = O-phospho-L-tyrosyl-[protein] + ADP + H(+). Its activity is regulated as follows. Protein kinase activity is activated following autophosphorylation at Tyr-369. Inhibited by harmine, an ATP competitive inhibitor. Inhibited by small-compound GSK-626616. In terms of biological role, dual-specificity protein kinase that promotes disassembly of several types of membraneless organelles during mitosis, such as stress granules, nuclear speckles and pericentriolar material. Dual-specificity tyrosine-regulated kinases (DYRKs) autophosphorylate a critical tyrosine residue in their activation loop and phosphorylate their substrate on serine and threonine residues. Acts as a central dissolvase of membraneless organelles during the G2-to-M transition, after the nuclear-envelope breakdown: acts by mediating phosphorylation of multiple serine and threonine residues in unstructured domains of proteins, such as SRRM1 and PCM1. Does not mediate disassembly of all membraneless organelles: disassembly of P-body and nucleolus is not regulated by DYRK3. Dissolution of membraneless organelles at the onset of mitosis is also required to release mitotic regulators, such as ZNF207, from liquid-unmixed organelles where they are sequestered and keep them dissolved during mitosis. Regulates mTORC1 by mediating the dissolution of stress granules: during stressful conditions, DYRK3 partitions from the cytosol to the stress granule, together with mTORC1 components, which prevents mTORC1 signaling. When stress signals are gone, the kinase activity of DYRK3 is required for the dissolution of stress granule and mTORC1 relocation to the cytosol: acts by mediating the phosphorylation of the mTORC1 inhibitor AKT1S1, allowing full reactivation of mTORC1 signaling. Also acts as a negative regulator of EPO-dependent erythropoiesis: may place an upper limit on red cell production during stress erythropoiesis. Inhibits cell death due to cytokine withdrawal in hematopoietic progenitor cells. Promotes cell survival upon genotoxic stress through phosphorylation of SIRT1: this in turn inhibits p53/TP53 activity and apoptosis. The polypeptide is Dual specificity tyrosine-phosphorylation-regulated kinase 3 (Homo sapiens (Human)).